The sequence spans 91 residues: Small ribosomal subunit protein uS19 (91 aa).

The protein belongs to the universal ribosomal protein uS19 family.

Functionally, protein S19 forms a complex with S13 that binds strongly to the 16S ribosomal RNA. This chain is Small ribosomal subunit protein uS19, found in Laribacter hongkongensis (strain HLHK9).